Here is a 250-residue protein sequence, read N- to C-terminus: Histone H1.1 (250 aa).

The segment covering Met1–Ser11 has biased composition (polar residues). Disordered stretches follow at residues Met1–Val52 and Gln104–Lys250. The H15 domain occupies Ser44–Ala118. Residues Lys122–Lys133 are compositionally biased toward basic and acidic residues. The segment covering Ala140–Ala161 has biased composition (low complexity). The segment covering Lys174–Lys191 has biased composition (basic and acidic residues). A compositionally biased stretch (low complexity) spans Thr192 to Lys234. A compositionally biased stretch (basic residues) spans Thr235–Lys250.

It belongs to the histone H1/H5 family.

It localises to the nucleus. Its subcellular location is the chromosome. Its function is as follows. Histones H1 are necessary for the condensation of nucleosome chains into higher-order structures. This Drosophila virilis (Fruit fly) protein is Histone H1.1 (His1.1).